The chain runs to 546 residues: uncharacterized protein (546 aa).

Residues 52–123 form the SLH domain; that stretch reads SVAELRDVQP…NTIEQLLQEN (72 aa).

It belongs to the OprB family.

This is an uncharacterized protein from Synechocystis sp. (strain ATCC 27184 / PCC 6803 / Kazusa).